The following is a 617-amino-acid chain: Putative type VI secretion system protein VgrGA (617 aa).

Disordered stretches follow at residues 325–344 (GQQP…TLSN) and 449–469 (RTFH…TRTS).

It belongs to the VgrG protein family.

A Vgr protein that is probably part of a type VI secretion system (T6SS). May be required for export of proteins involved in Rhs-mediated cellular contact-dependent growth inhibition (CDI). In Dickeya dadantii (strain 3937) (Erwinia chrysanthemi (strain 3937)), this protein is Putative type VI secretion system protein VgrGA (vgrGA).